Consider the following 102-residue polypeptide: Small ribosomal subunit protein uS10 (102 aa).

It belongs to the universal ribosomal protein uS10 family. As to quaternary structure, part of the 30S ribosomal subunit.

Its function is as follows. Involved in the binding of tRNA to the ribosomes. The protein is Small ribosomal subunit protein uS10 of Pelotomaculum thermopropionicum (strain DSM 13744 / JCM 10971 / SI).